Here is a 132-residue protein sequence, read N- to C-terminus: Small ribosomal subunit protein uS8 (132 aa).

It belongs to the universal ribosomal protein uS8 family. As to quaternary structure, part of the 30S ribosomal subunit. Contacts proteins S5 and S12.

Functionally, one of the primary rRNA binding proteins, it binds directly to 16S rRNA central domain where it helps coordinate assembly of the platform of the 30S subunit. The chain is Small ribosomal subunit protein uS8 from Streptomyces coelicolor (strain ATCC BAA-471 / A3(2) / M145).